The chain runs to 255 residues: uncharacterized protein (255 aa).

The Microbody targeting signal signature appears at 253–255 (SKI).

This sequence belongs to the enoyl-CoA hydratase/isomerase family.

The protein resides in the peroxisome. This is an uncharacterized protein from Caenorhabditis elegans.